The following is an 89-amino-acid chain: Cell division topological specificity factor (89 aa).

This sequence belongs to the MinE family.

Functionally, prevents the cell division inhibition by proteins MinC and MinD at internal division sites while permitting inhibition at polar sites. This ensures cell division at the proper site by restricting the formation of a division septum at the midpoint of the long axis of the cell. The sequence is that of Cell division topological specificity factor from Laribacter hongkongensis (strain HLHK9).